Reading from the N-terminus, the 478-residue chain is Proton-coupled amino acid transporter 2 (478 aa).

Composition is skewed to polar residues over residues 1 to 14 (MSVTKSARSPQVAT) and 26 to 37 (KLQSQDPSPANG). Residues 1 to 46 (MSVTKSARSPQVATPLNLDLPESAKKLQSQDPSPANGSSSESSKKT) are disordered. The Cytoplasmic segment spans residues 1-53 (MSVTKSARSPQVATPLNLDLPESAKKLQSQDPSPANGSSSESSKKTKGITGFQ). A helical membrane pass occupies residues 54-74 (TLVHLVKGNMGTGILGLPLAV). The Extracellular segment spans residues 75–76 (KN). Residues 77–97 (AGILMGPLSLLVMGLIACHCM) traverse the membrane as a helical segment. At 98–143 (HILVRCAQRFCHRLNKPFMDYGDTVMHGLAFSPNAWLQNHAHWGRR) the chain is on the cytoplasmic side. The chain crosses the membrane as a helical span at residues 144–164 (VVSFFLIVTQLGFCCVYIVFL). Residues 165–192 (ADNLKQVVEAVNSTTISCHKNETVVLTP) lie on the Extracellular side of the membrane. A helical membrane pass occupies residues 193 to 213 (TMDSRLYMLSFLPVLGLLVFV). Residues 214-217 (RNLR) lie on the Cytoplasmic side of the membrane. The chain crosses the membrane as a helical span at residues 218–238 (VLTIFSLLANISMLVSLVIIA). Over 239–259 (QYIIQEIPDASQLPLVASWKT) the chain is Extracellular. Residues 260–280 (YPLFFGTAIFSFESIGVVLPL) form a helical membrane-spanning segment. At 281–292 (ENKMKDARGFPT) the chain is on the cytoplasmic side. The helical transmembrane segment at 293 to 313 (ILSLGMSIITTLYIAIGALGY) threads the bilayer. Residues 314–340 (LRFGDDIKASITLNLPNCWLYQSVKLL) lie on the Extracellular side of the membrane. The chain crosses the membrane as a helical span at residues 341 to 361 (YVVGILCTYALQFYVPAEIII). Residues 362-374 (PLAVSQVSKRWAL) lie on the Cytoplasmic side of the membrane. A helical transmembrane segment spans residues 375–395 (PVDLSIRLALVCLTCMLAILI). At 396 to 399 (PRLD) the chain is on the extracellular side. The helical transmembrane segment at 400-420 (LVLSLVGSVSSSALALIIPPL) threads the bilayer. Over 421–441 (LEVVTYYGEGISPLTVTKDAL) the chain is Cytoplasmic. The chain crosses the membrane as a helical span at residues 442-462 (ISILGFMGFVVGTYQALDELI). The Extracellular portion of the chain corresponds to 463–478 (KSGNSPALSNSTMFIQ).

It belongs to the amino acid/polyamine transporter 2 family. As to expression, expressed in spinal cord, brain, testis, lung, heart, colon, spleen, kidney and muscle. Found in neuronal cell bodies in the anterior horn, in spinal cord brain stem, cerebellum, hippocampus, hypothalamus, rhinencephalon, cerebral cortex, and olfactory bulb in the brain. Also expressed in bone and fat tissues.

It localises to the cell membrane. The protein localises to the endoplasmic reticulum membrane. Its subcellular location is the recycling endosome membrane. The catalysed reaction is glycine(in) + H(+)(in) = glycine(out) + H(+)(out). The enzyme catalyses L-alanine(in) + H(+)(in) = L-alanine(out) + H(+)(out). It carries out the reaction D-alanine(in) + H(+)(in) = D-alanine(out) + H(+)(out). It catalyses the reaction L-proline(out) + H(+)(out) = L-proline(in) + H(+)(in). The catalysed reaction is D-proline(out) + H(+)(out) = D-proline(in) + H(+)(in). The enzyme catalyses 4-hydroxy-L-proline(in) + H(+)(in) = 4-hydroxy-L-proline(out) + H(+)(out). It carries out the reaction L-serine(in) + H(+)(in) = L-serine(out) + H(+)(out). It catalyses the reaction D-serine(out) + H(+)(out) = D-serine(in) + H(+)(in). The catalysed reaction is beta-alanine(in) + H(+)(in) = beta-alanine(out) + H(+)(out). The enzyme catalyses 4-aminobutanoate(in) + H(+)(in) = 4-aminobutanoate(out) + H(+)(out). It carries out the reaction sarcosine(in) + H(+)(in) = sarcosine(out) + H(+)(out). It catalyses the reaction N,N-dimethylglycine(in) + H(+)(in) = N,N-dimethylglycine(out) + H(+)(out). Its function is as follows. Electrogenic proton/amino acid symporter with a high selectivity for the small side chains amino acids glycine, alanine and proline, where both L- and D-enantiomers are transported. Extension of the backbone length, as in beta-alanine and 4-aminobutanoate or methylation of the amino group, as in sarcosine and N,N-dimethylglycine, are also tolerated but decrease transport efficiency. A free carboxyl group is preferred. The protein is Proton-coupled amino acid transporter 2 of Mus musculus (Mouse).